A 208-amino-acid chain; its full sequence is Uracil phosphoribosyltransferase (208 aa).

Residues Arg-78, Arg-103, and 130-138 (DPMLATGGS) each bind 5-phospho-alpha-D-ribose 1-diphosphate. Uracil contacts are provided by residues Ile-193 and 198–200 (GDA). Asp-199 is a 5-phospho-alpha-D-ribose 1-diphosphate binding site.

This sequence belongs to the UPRTase family. Mg(2+) is required as a cofactor.

The catalysed reaction is UMP + diphosphate = 5-phospho-alpha-D-ribose 1-diphosphate + uracil. It functions in the pathway pyrimidine metabolism; UMP biosynthesis via salvage pathway; UMP from uracil: step 1/1. With respect to regulation, allosterically activated by GTP. In terms of biological role, catalyzes the conversion of uracil and 5-phospho-alpha-D-ribose 1-diphosphate (PRPP) to UMP and diphosphate. The sequence is that of Uracil phosphoribosyltransferase from Shewanella piezotolerans (strain WP3 / JCM 13877).